We begin with the raw amino-acid sequence, 584 residues long: Peroxynitrite isomerase THAP4 (584 aa).

The segment at 1–85 (MVICCAAANC…LKPTAVPSIF (85 aa)) adopts a THAP-type zinc-finger fold. Positions 84–330 (IFHLAEKKRR…EAVQSEHSDA (247 aa)) are disordered. Residues 89–104 (EKKRRAGGHGRPRRRD) show a composition bias toward basic residues. Residues 122-138 (GKAAAGSPSSSSASPMA) show a composition bias toward low complexity. The span at 158-178 (AARETAGQERGRQPLEGRAED) shows a compositional bias: basic and acidic residues. The segment covering 190–208 (GEAGTGAEDAGEEGATPAD) has biased composition (low complexity). An HCFC1-binding motif (HBM) motif is present at residues 236 to 239 (LHSY). Phosphoserine is present on serine 240. Residues 248–267 (ERPAVPREPVERKRLRRDAE) are compositionally biased toward basic and acidic residues. Residues 422–584 (PPKMSPVVEP…LHVTYKKVTP (163 aa)) are nitrobindin. Heme b is bound by residues threonine 451 and histidine 574.

In the C-terminal section; belongs to the nitrobindin family. In terms of assembly, homodimer. Heme b is required as a cofactor.

The protein resides in the cytoplasm. Its subcellular location is the nucleus. It carries out the reaction peroxynitrite = nitrate. The protein operates within nitrogen metabolism. In terms of biological role, heme-binding protein able to scavenge peroxynitrite and to protect free L-tyrosine against peroxynitrite-mediated nitration, by acting as a peroxynitrite isomerase that converts peroxynitrite to nitrate. Therefore, this protein likely plays a role in peroxynitrite sensing and in the detoxification of reactive nitrogen and oxygen species (RNS and ROS, respectively). Is able to bind nitric oxide (NO) in vitro, but may act as a sensor of peroxynitrite levels in vivo, possibly modulating the transcriptional activity residing in the N-terminal region. This chain is Peroxynitrite isomerase THAP4, found in Bos taurus (Bovine).